The sequence spans 458 residues: MHDKTWSGRFNEPVSELVKQYTASIGFDRRLAEWDIQGSLAHAQMLKETGVLDEGDLADIRRGMAEILEEIRSGKIEWSSDLEDVHMNIERRLTDKIGDAGKRLHTGRSRNDQVATDIRLWLRDQITVIRSLIQSLQTALLDLAEQNAETVMPGFTHLQVAQPVSFGHHMLAYVEMLGRDNERMADCRCRVNRMPLGAAALAGTTYPIQREITAELLGFEQICQNSLDAVSDRDFAIEFTAAASLVMVHLSRLSEELILWMSPRFGFIDIADRFCTGSSIMPQKKNPDVPELVRGKSGRVIGHLIGLITLMKSQPLAYNKDNQEDKEPLFDTADTLIDTLRIYADMMRGVTVKPDNMRAAVMQGFATATDLADYLVKKGMPFRDAHEVVAQAVRHADEAGVDLSELPLEVLQGFSDLIADDVYGVLTPEGSLNARNHLGGTAPEQVRFQVKRWREMLA.

This sequence belongs to the lyase 1 family. Argininosuccinate lyase subfamily.

It localises to the cytoplasm. It carries out the reaction 2-(N(omega)-L-arginino)succinate = fumarate + L-arginine. The protein operates within amino-acid biosynthesis; L-arginine biosynthesis; L-arginine from L-ornithine and carbamoyl phosphate: step 3/3. The polypeptide is Argininosuccinate lyase (Neisseria meningitidis serogroup C / serotype 2a (strain ATCC 700532 / DSM 15464 / FAM18)).